The sequence spans 172 residues: Achaete-scute homolog 4 (172 aa).

Residues 72–124 enclose the bHLH domain; it reads AFLRKRNERERQRVRCVNEGYARLRDHLPRELADKRLSKVETLRAAIDYIKHL. Positions 144 to 172 are disordered; the sequence is QRRAECNSDGESKASSAPSPSSEPEEGGS. Positions 145–155 are enriched in basic and acidic residues; sequence RRAECNSDGES. Positions 156–165 are enriched in low complexity; it reads KASSAPSPSS.

As to expression, expressed in skin. 7-fold higher expression in fetal skin than in adult skin. Weak expression also detected in fetal lung, aorta and brain, and in adult stomach, kidney, ovary and breast.

It is found in the nucleus. Could be a transcriptional regulator involved in skin development. This is Achaete-scute homolog 4 (ASCL4) from Homo sapiens (Human).